Reading from the N-terminus, the 938-residue chain is MAKTRVHELAKEFGVESKFVLEKFKEMGEFVKSASSTVELPAEMRFRKEYGEKLKAEASAAPAAPAEKPAAKKAPAKKAAATAEPEALAAEPAAEPAAAEAPAAAEAEAPAAKAAAPKPGPKPAPVAEQPAPPAEPEAPEAPEAPAASAAPAAPKAPAPRPVGRPGAPRPGNNPFASSQGMGRRPAPGAPAAPGAGDNRPPRPPAAREGGVPGRPGMPRPNPAMMPKSPSAFGAGPGGRGPARPGAPGRGGAPGRGGAPGRGGVGTGAPGRGGAPGGGFGPSGGGRPGGGRPGQRGQTQGAFGRPGGPSRRGRKSKRARRQEFEAMEAPTIGGIRVRKGNGETVRLPRGASLTDFAERINVEPAQLVQMLFSLGEMVTATESVNDETLELLGEELNYVVEVVSPEDEDRELLESFDIEFADDEDDEGHFEARPPVVTVMGHVDHGKTKLLDALRHANVASGEAGGITQHIGAYQVHTDVDGEDRKITFIDTPGHEAFTAMRARGSQSSDIAVLVVAADDGVMPQTVEALNHAKAAGVPIVVAVNKIDKPEADPTKVRGQLTEYGLVPEEYGGDTMFVDVSAKSELNLDKLLEAVVLTADASLDLRANPNRDAQGLVIEAHLDRGRGPVATILVQRGTLHVGDSIVAGPAHGRVRAMLDEYGNELTEATPSRPAMVLGLSTVPGAGQNFIVVEDDRMARQIAEKREARERAAMQAKRRVRRTLEDFMASMEKGESQELNLILKGDVSGSVEALEDALAKIDVGDDVSLRVIDRGVGAITETNVDLAAASDAIIIGFNVRPQGKATELADREGVEIRYYTVIYQAIEEIEAALKGMLKPEFEESTLGQAEIRAIFRSSKVGNIAGCMVISGVIRRNAKVRVIRDGAVVADNLDLASLKREKDDASEVREGFECGLVLRNFQDIKEGDIVEAFEMREIPRA.

The segment at 55-322 (KAEASAAPAA…RKSKRARRQE (268 aa)) is disordered. Low complexity-rich tracts occupy residues 57–68 (EASAAPAAPAEK) and 77–117 (KKAA…AAAP). Positions 118–136 (KPGPKPAPVAEQPAPPAEP) are enriched in pro residues. Composition is skewed to low complexity over residues 141 to 153 (APEA…APAA), 180 to 198 (GMGR…AGDN), and 224 to 233 (MMPKSPSAFG). The span at 247-293 (PGRGGAPGRGGAPGRGGVGTGAPGRGGAPGGGFGPSGGGRPGGGRPG) shows a compositional bias: gly residues. Residues 310–319 (RRGRKSKRAR) show a composition bias toward basic residues. The tr-type G domain maps to 431–603 (ARPPVVTVMG…VVLTADASLD (173 aa)). Positions 440–447 (GHVDHGKT) are G1. 440 to 447 (GHVDHGKT) is a binding site for GTP. The interval 465–469 (GITQH) is G2. The G3 stretch occupies residues 490–493 (DTPG). Residues 490 to 494 (DTPGH) and 544 to 547 (NKID) each bind GTP. The segment at 544–547 (NKID) is G4. The G5 stretch occupies residues 580–582 (SAK).

This sequence belongs to the TRAFAC class translation factor GTPase superfamily. Classic translation factor GTPase family. IF-2 subfamily.

The protein localises to the cytoplasm. In terms of biological role, one of the essential components for the initiation of protein synthesis. Protects formylmethionyl-tRNA from spontaneous hydrolysis and promotes its binding to the 30S ribosomal subunits. Also involved in the hydrolysis of GTP during the formation of the 70S ribosomal complex. The protein is Translation initiation factor IF-2 of Nocardioides sp. (strain ATCC BAA-499 / JS614).